Here is a 481-residue protein sequence, read N- to C-terminus: Solute carrier family 46 member 2 (481 aa).

Residues 1–37 (MGPEAAGPGRGAAPRLQVRTWIEPVVAATQVASSLYE) are Cytoplasmic-facing. Residues 38-58 (AGLLLVVKASFGAGAGAGAGA) form a helical membrane-spanning segment. At 59–83 (ASNHSAGPPRGAPEDQQQRAISNFY) the chain is on the extracellular side. Asn61 carries N-linked (GlcNAc...) asparagine glycosylation. Residues 84-104 (IVYNLVVGLTPLLSAYALGWL) traverse the membrane as a helical segment. The Cytoplasmic segment spans residues 105–113 (SDRRHRKVA). Residues 114–134 (ICVALLGFLLSRVGLLLKVLL) form a helical membrane-spanning segment. Residues 135–143 (DWPVEVLYG) are Extracellular-facing. The helical transmembrane segment at 144–164 (AAALNGLCGGFSAFWAGVMAL) threads the bilayer. The Cytoplasmic portion of the chain corresponds to 165–179 (GSLGSSEGRRSVRLV). Residues 180-200 (LIDLILGLAGFCGSMASGHLF) form a helical membrane-spanning segment. The Extracellular portion of the chain corresponds to 201 to 210 (KQVAGHSGQG). A helical transmembrane segment spans residues 211-231 (LVLTACSVSCATFALLYSLLV). Residues 232 to 286 (LKVPEAAAGSGQALSAGDSVAGTVGTYRTLDPDHSDKQSVQGLHPPSPGKAKPRR) are Cytoplasmic-facing. The interval 263–282 (PDHSDKQSVQGLHPPSPGKA) is disordered. Residues 287-307 (TIIALLFLGAIVYDLAVVGTV) traverse the membrane as a helical segment. Over 308 to 326 (DVMPLFVLREPLSWNQVQV) the chain is Extracellular. The helical transmembrane segment at 327–347 (GYGMAAGYTIFITSFLGVLVF) threads the bilayer. Topologically, residues 348-353 (SRCFQD) are cytoplasmic. A helical membrane pass occupies residues 354–374 (TTMIMIGMVSFGSGALLLAFV). The Extracellular segment spans residues 375 to 376 (KE). Residues 377–397 (TYMFYIARAVMLFALIPITTI) traverse the membrane as a helical segment. Residues 398–412 (RSAMSKLIKGSSYGK) are Cytoplasmic-facing. The chain crosses the membrane as a helical span at residues 413-433 (VFVILQLSLTLTGVVTSTVYN). At 434 to 446 (KIYQVTMEKFIGT) the chain is on the extracellular side. Residues 447–467 (CFALSSFLSFLAIIPIGIVAY) form a helical membrane-spanning segment. Topologically, residues 468–481 (KQASWLQYGDVRET) are cytoplasmic.

Belongs to the major facilitator superfamily. SLC46A family. In terms of processing, glycosylated. In terms of tissue distribution, highly expressed by the epididymal duct epithelium.

Its subcellular location is the endosome membrane. The protein resides in the cell membrane. The enzyme catalyses N-acetyl-beta-D-glucosaminyl-(1-&gt;4)-1,6-anhydro-N-acetyl-beta-D-muramoyl-L-alanyl-gamma-D-glutamyl-meso-2,6-diaminopimeloyl-D-alanine(out) + n H(+)(out) = N-acetyl-beta-D-glucosaminyl-(1-&gt;4)-1,6-anhydro-N-acetyl-beta-D-muramoyl-L-alanyl-gamma-D-glutamyl-meso-2,6-diaminopimeloyl-D-alanine(in) + n H(+)(in). It carries out the reaction L-alanyl-gamma-D-glutamyl-meso-2,6-diaminopimelate(out) + n H(+)(out) = L-alanyl-gamma-D-glutamyl-meso-2,6-diaminopimelate(in) + n H(+)(in). The catalysed reaction is N-acetyl-D-muramoyl-L-alanyl-D-isoglutamine(out) + n H(+)(out) = N-acetyl-D-muramoyl-L-alanyl-D-isoglutamine(in) + n H(+)(in). It catalyses the reaction 2',3'-cGAMP(out) + n H(+)(out) = 2',3'-cGAMP(in) + n H(+)(in). The enzyme catalyses 3',3'-cGAMP(out) + n H(+)(out) = 3',3'-cGAMP(in) + n H(+)(in). Functionally, proton-coupled transporter that delivers pathogen-associated or danger-associated molecular patterns to cytosolic pattern recognition receptors as part of the innate immune response to microbes or tissue injury. Has selectivity toward muropeptides that contain the amino acid diaminopimelic acid (DAP-type peptidoglycan muropeptides) including Tri-DAP and tracheal toxin (TCT), common in Gram-negative bacteria and Gram-positive bacilli. In the context of immune recognition of skin microbiota, shuttles bacterial muropeptides across the endolysosomal membranes into the cytosol for recognition by NOD1, triggering MYD88-dependent secretion of IL1A and neutrophil recruitment in a pyroptosis-type inflammatory process. To a lesser extent and redundantly, transports muramyl dipeptides derived from most bacterial proteoglycans, eliciting NOD2 receptor activation and downstream inflammatory responses. Postulated to function as an importer of cyclic GMP-AMP dinucleotides (cGAMPs) in monocyte and macrophage cell lineages. Selectively imports cGAMPs derived from pathogenic bacteria such as 3'3'-cGAMP thus providing for differential immune recognition of pathogenic versus commensal bacteria. During tumorigenesis may transport extracellular tumor-derived 2'3'-cGAMP across the plasma membrane of M1-polarized macrophages to activate the anti-tumoral stimulator of interferon genes (STING) pathway. The transport mechanism, its electrogenicity and stoichiometry remain to be elucidated. In Canis lupus familiaris (Dog), this protein is Solute carrier family 46 member 2.